A 170-amino-acid polypeptide reads, in one-letter code: Cathelicidin antimicrobial peptide (170 aa).

The first 30 residues, 1 to 30 (MNTQWDSPSLGRWSLVLLLLGLVMPLAIVA), serve as a signal peptide directing secretion. A propeptide spans 31–131 (QVLSYQEAVL…DISCDKDKRK (101 aa)) (cathelin-like domain (CLD)). Disulfide bonds link Cys-86–Cys-97 and Cys-108–Cys-125. Positions 150-162 (LKNIGQRIKDFFG) are active core.

Belongs to the cathelicidin family. In terms of assembly, monomer, homodimer or homotrimer (in vitro). Oligomerizes as tetra- or hexamer in solution (in vitro). Proteolytically cleaved by proteinase PRTN3 into antibacterial peptide LL-37. Proteolytically cleaved by cathepsin CTSG and neutrophil elastase ELANE. Post-translationally, resistant to proteolytic degradation in solution, and when bound to both zwitterionic (mimicking mammalian membranes) and negatively charged membranes (mimicking bacterial membranes). In terms of processing, after secretion onto the skin surface, the CAMP gene product is processed by a serine protease-dependent mechanism into multiple novel antimicrobial peptides distinct from and shorter than cathelicidin LL-37. These peptides show enhanced antimicrobial action, acquiring the ability to kill skin pathogens such as S.aureus, E.coli and C.albicans. These peptides have lost the ability to stimulate CXCL8/IL8 release from keratinocytes. The peptides act synergistically, killing bacteria at lower concentrations when present together, and maintain activity at increased salt condition.

It localises to the secreted. It is found in the vesicle. Functionally, antimicrobial protein that is an integral component of the innate immune system. Binds to bacterial lipopolysaccharides (LPS). Acts via neutrophil N-formyl peptide receptors to enhance the release of CXCL2. Postsecretory processing generates multiple cathelicidin antimicrobial peptides with various lengths which act as a topical antimicrobial defense in sweat on skin. The unprocessed precursor form, cathelicidin antimicrobial peptide, inhibits the growth of Gram-negative E.coli and E.aerogenes with efficiencies comparable to that of the mature peptide LL-37 (in vitro). Its function is as follows. Antimicrobial peptide that is an integral component of the innate immune system. Binds to bacterial lipopolysaccharides (LPS). Causes membrane permeabilization by forming transmembrane pores (in vitro). Causes lysis of E.coli. Exhibits antimicrobial activity against Gram-negative bacteria such as P.aeruginosa, S.typhimurium, E.aerogenes, E.coli and P.syringae, Gram-positive bacteria such as L.monocytogenes, S.epidermidis, S.pyogenes and S.aureus, as well as vancomycin-resistant enterococci (in vitro). Exhibits antimicrobial activity against methicillin-resistant S.aureus, P.mirabilis, and C.albicans in low-salt media, but not in media containing 100 mM NaCl (in vitro). Forms chiral supramolecular assemblies with quinolone signal (PQS) molecules of P.aeruginosa, which may lead to interference of bacterial quorum signaling and perturbance of bacterial biofilm formation. May form supramolecular fiber-like assemblies on bacterial membranes. Induces cytokine and chemokine producation as well as TNF/TNFA and CSF2/GMCSF production in normal human keratinocytes. Exhibits hemolytic activity against red blood cells. Exhibits antimicrobial activity against E.coli and B.megaterium (in vitro). This is Cathelicidin antimicrobial peptide from Ateles fusciceps (Brown-headed spider monkey).